A 331-amino-acid polypeptide reads, in one-letter code: RNA 3'-terminal phosphate cyclase (331 aa).

Residues Gln100 and 276–280 (HLADQ) contribute to the ATP site. His301 serves as the catalytic Tele-AMP-histidine intermediate.

It belongs to the RNA 3'-terminal cyclase family. Type 1 subfamily.

The protein resides in the cytoplasm. It carries out the reaction a 3'-end 3'-phospho-ribonucleotide-RNA + ATP = a 3'-end 2',3'-cyclophospho-ribonucleotide-RNA + AMP + diphosphate. In terms of biological role, catalyzes the conversion of 3'-phosphate to a 2',3'-cyclic phosphodiester at the end of RNA. The mechanism of action of the enzyme occurs in 3 steps: (A) adenylation of the enzyme by ATP; (B) transfer of adenylate to an RNA-N3'P to produce RNA-N3'PP5'A; (C) and attack of the adjacent 2'-hydroxyl on the 3'-phosphorus in the diester linkage to produce the cyclic end product. The biological role of this enzyme is unknown but it is likely to function in some aspects of cellular RNA processing. The polypeptide is RNA 3'-terminal phosphate cyclase (Methanococcoides burtonii (strain DSM 6242 / NBRC 107633 / OCM 468 / ACE-M)).